We begin with the raw amino-acid sequence, 795 residues long: Outer membrane protein assembly factor BamA (795 aa).

A signal peptide spans 1–19 (MKKLLIASLLFGTTTTVFA). POTRA domains lie at 22-89 (FVAK…VVAK), 90-170 (SIIS…INED), 173-259 (AKLA…VNEG), 262-341 (YDLR…VDAG), and 344-418 (LTVR…VKER).

This sequence belongs to the BamA family. Part of the Bam complex.

The protein localises to the cell outer membrane. In terms of biological role, part of the outer membrane protein assembly complex, which is involved in assembly and insertion of beta-barrel proteins into the outer membrane. This is Outer membrane protein assembly factor BamA from Haemophilus influenzae (strain ATCC 51907 / DSM 11121 / KW20 / Rd).